The primary structure comprises 466 residues: UDP-N-acetylmuramate--L-alanine ligase (466 aa).

114–120 (GTHGKTT) serves as a coordination point for ATP.

It belongs to the MurCDEF family.

The protein resides in the cytoplasm. The catalysed reaction is UDP-N-acetyl-alpha-D-muramate + L-alanine + ATP = UDP-N-acetyl-alpha-D-muramoyl-L-alanine + ADP + phosphate + H(+). It participates in cell wall biogenesis; peptidoglycan biosynthesis. Its function is as follows. Cell wall formation. This chain is UDP-N-acetylmuramate--L-alanine ligase, found in Chlorobium phaeobacteroides (strain DSM 266 / SMG 266 / 2430).